The sequence spans 354 residues: Uroporphyrinogen decarboxylase (354 aa).

Substrate contacts are provided by residues Arg27–Arg31, Asp77, Tyr154, Thr209, and His327.

This sequence belongs to the uroporphyrinogen decarboxylase family. In terms of assembly, homodimer.

It is found in the cytoplasm. The catalysed reaction is uroporphyrinogen III + 4 H(+) = coproporphyrinogen III + 4 CO2. The protein operates within porphyrin-containing compound metabolism; protoporphyrin-IX biosynthesis; coproporphyrinogen-III from 5-aminolevulinate: step 4/4. Its function is as follows. Catalyzes the decarboxylation of four acetate groups of uroporphyrinogen-III to yield coproporphyrinogen-III. The protein is Uroporphyrinogen decarboxylase of Serratia proteamaculans (strain 568).